Here is a 375-residue protein sequence, read N- to C-terminus: Alpha-2,8-sialyltransferase 8B (375 aa).

Residues 1-6 are Cytoplasmic-facing; the sequence is MQLQFR. The chain crosses the membrane as a helical; Signal-anchor for type II membrane protein span at residues 7–23; sequence SWMLAALTLLVVFLIFA. Residues 24 to 375 lie on the Lumenal side of the membrane; it reads DISEIEEEIG…LTVGQCDGAT (352 aa). N-linked (GlcNAc...) asparagine glycans are attached at residues asparagine 60, asparagine 72, asparagine 89, and asparagine 134. Disulfide bonds link cysteine 157–cysteine 307 and cysteine 171–cysteine 371. Residues asparagine 162 and asparagine 185 each coordinate CMP-N-acetyl-beta-neuraminate. Residues asparagine 219 and asparagine 234 are each glycosylated (N-linked (GlcNAc...) asparagine). Threonine 294, threonine 295, glycine 296, tryptophan 316, tyrosine 329, and histidine 330 together coordinate CMP-N-acetyl-beta-neuraminate. Histidine 346 (proton donor/acceptor) is an active-site residue.

The protein belongs to the glycosyltransferase 29 family. Autopolysialylated. Autopolysialylation is not a prerequisite for the polysialylation acitity, but enhances the polysialylation acitity. As to expression, highly expressed in fetal brain, kidney and heart and to a much lesser extent in adult heart and thymus.

The protein resides in the golgi apparatus membrane. It localises to the secreted. Its subcellular location is the cell membrane. The catalysed reaction is [N-acetyl-alpha-D-neuraminosyl-(2-&gt;8)](n) + CMP-N-acetyl-beta-neuraminate = [N-acetyl-alpha-D-neuraminosyl-(2-&gt;8)](n+1) + CMP + H(+). It participates in protein modification; protein glycosylation. In terms of biological role, catalyzes the transfer of a sialic acid from a CMP-linked sialic acid donor onto a terminal alpha-2,3-, alpha-2,6-, or alpha-2,8-linked sialic acid of an N-linked glycan acceptor through alpha-2,8-linkages. Therefore, participates in polysialic acid synthesis on various sialylated N-acetyllactosaminyl oligosaccharides (alpha-2,3-, alpha-2,6-, or alpha-2,8-linked sialic acid), including NCAM1, NCAM1 N-glycans, FETUB N-glycans, and to a lesser extent sialylparagloboside (SPG) and AHSG, which does not require the initial addition of an alpha 2,8-sialic acid. However, does not exhibit sialic acid-polymerase activity. Catalyzes polysialic acid synthesis in the hippocampal on NCAM1 and supports neurite outgrowth. ST8SIA2-mediated polysialylation influences on oligodendrocyte differentiation and may promote the integrity of myelin and axons. The sequence is that of Alpha-2,8-sialyltransferase 8B from Homo sapiens (Human).